The primary structure comprises 434 residues: D-inositol 3-phosphate glycosyltransferase (434 aa).

Histidine 26 contacts 1D-myo-inositol 3-phosphate. UDP-N-acetyl-alpha-D-glucosamine-binding positions include glutamine 32–proline 33 and glycine 40. Residues aspartate 37–asparagine 42, lysine 95, tyrosine 128, threonine 152, and arginine 172 each bind 1D-myo-inositol 3-phosphate. Residues arginine 246 and lysine 251 each coordinate UDP-N-acetyl-alpha-D-glucosamine. 3 residues coordinate Mg(2+): tyrosine 321, arginine 322, and alanine 324. Residues glutamate 334 and glutamate 342 each coordinate UDP-N-acetyl-alpha-D-glucosamine. Position 348 (threonine 348) interacts with Mg(2+).

It belongs to the glycosyltransferase group 1 family. MshA subfamily. As to quaternary structure, homodimer.

The catalysed reaction is 1D-myo-inositol 3-phosphate + UDP-N-acetyl-alpha-D-glucosamine = 1D-myo-inositol 2-acetamido-2-deoxy-alpha-D-glucopyranoside 3-phosphate + UDP + H(+). Functionally, catalyzes the transfer of a N-acetyl-glucosamine moiety to 1D-myo-inositol 3-phosphate to produce 1D-myo-inositol 2-acetamido-2-deoxy-glucopyranoside 3-phosphate in the mycothiol biosynthesis pathway. The protein is D-inositol 3-phosphate glycosyltransferase of Thermobifida fusca (strain YX).